The primary structure comprises 144 residues: Large ribosomal subunit protein uL24 (144 aa).

The segment at M1–P22 is disordered. Positions K13–P22 are enriched in basic residues.

Belongs to the universal ribosomal protein uL24 family.

This chain is Large ribosomal subunit protein uL24 (RPL26), found in Littorina littorea (Common periwinkle).